Reading from the N-terminus, the 490-residue chain is MAQSKLDEVVSLAKRRGFVFPAGEIYGGTRSAWDYGPLGVALKDNIKREWWRSMVVTRPDVVGVDTSIILPPEVWVASGHVSVFNDPLVECLNCHKRNRADKLEESYAEKHGDKMPENGMKDIVCPNCGIRGQWTEPRDFNMMLRTHLGPVEDENSLHYLRPETAQGIFVDFKNVMTSSRSRPPFGIANMGKSFRNEITPGNFIFRTREFEQMEMEFFVTPGTDEEWHQYWIDARTRWYIDLGVKPENLRHYEHPKEKLSHYSKRTVDIEYKFGFQGSDWGELEGIANRTDYDLSAHSKHSGEDLSYFNQATGEKYVPYVIEPAAGLTRSLMCFLVDAYDVDEAPNTKGGVDKRTVLRLDPRLAPVKAAVLPLSKKPELQTVAQNLADDLRFNEWMIDYDESGAIGRRYRRQDEIGTPLCITVDFDTLEDHAVTIRERDTMAQERVALDKVADYVAARIGEKRTRVPLKPVEMGGEPWPESGVQEAGGLY.

Residues Arg-99 and Glu-163 each coordinate substrate. Residues 195–197 (RNE), 205–210 (FRTREF), 282–283 (EL), and 326–329 (GLTR) contribute to the ATP site. 210-214 (FEQME) lines the substrate pocket. Residue 322 to 326 (EPAAG) participates in substrate binding. Residues 470-490 (PVEMGGEPWPESGVQEAGGLY) are disordered.

Belongs to the class-II aminoacyl-tRNA synthetase family. In terms of assembly, homodimer.

It is found in the cytoplasm. The catalysed reaction is tRNA(Gly) + glycine + ATP = glycyl-tRNA(Gly) + AMP + diphosphate. Its function is as follows. Catalyzes the attachment of glycine to tRNA(Gly). This is Glycine--tRNA ligase from Bifidobacterium longum (strain NCC 2705).